The sequence spans 707 residues: Vicilin-like seed storage protein At2g18540 (707 aa).

Residues 1–24 (MSRFRILPLSIFLCFVSLFFCTES) form the signal peptide. The region spanning 42–185 (PLLVKKDQRT…AFAVPEDILR (144 aa)) is the Cupin type-1 1 domain. Residues N60, N203, N285, N356, N396, and N399 are each glycosylated (N-linked (GlcNAc...) asparagine). The Cupin type-1 2 domain occupies 247-403 (FNVFEEDPDF…SFNLSNETIK (157 aa)). Positions 439-696 (EEEEIERRRK…KKEEEEEKRR (258 aa)) are enriched in basic and acidic residues. The tract at residues 439–707 (EEEEIERRRK…PPQPKPPEEI (269 aa)) is disordered. The span at 698 to 707 (PPQPKPPEEI) shows a compositional bias: pro residues.

It belongs to the 7S seed storage protein family.

Functionally, seed storage protein. This Arabidopsis thaliana (Mouse-ear cress) protein is Vicilin-like seed storage protein At2g18540.